The sequence spans 85 residues: HssA/B-like protein 59 (85 aa).

The protein belongs to the hssA/B family.

This is HssA/B-like protein 59 (hssl59) from Dictyostelium discoideum (Social amoeba).